Consider the following 205-residue polypeptide: Deoxyuridine 5'-triphosphate nucleotidohydrolase (205 aa).

Ser-54 bears the Phosphoserine mark. Substrate is bound by residues 126-128, 140-143, Gly-151, and 199-200; these read RSG, GVID, and FG.

The protein belongs to the dUTPase family. As to quaternary structure, homotrimer. The cofactor is Mg(2+). In terms of tissue distribution, expressed in all tissues examined. Higher levels in heart and kidney.

The protein resides in the cytoplasm. It localises to the nucleus. The enzyme catalyses dUTP + H2O = dUMP + diphosphate + H(+). Its pathway is pyrimidine metabolism; dUMP biosynthesis; dUMP from dCTP (dUTP route): step 2/2. In terms of biological role, catalyzes the cleavage of 2'-deoxyuridine 5'-triphosphate (dUTP) into 2'-deoxyuridine 5'-monophosphate (dUMP) and inorganic pyrophosphate and through its action efficiently prevents uracil misincorporation into DNA and at the same time provides dUMP, the substrate for de novo thymidylate biosynthesis. Inhibits peroxisome proliferator-activated receptor (PPAR) activity by binding of its N-terminal to PPAR, preventing the latter's dimerization with retinoid X receptor. Essential for embryonic development. The sequence is that of Deoxyuridine 5'-triphosphate nucleotidohydrolase (Dut) from Rattus norvegicus (Rat).